A 208-amino-acid polypeptide reads, in one-letter code: uncharacterized protein (208 aa).

Residues Lys-124–Ala-208 form a disordered region. The span at Thr-133 to Glu-170 shows a compositional bias: basic and acidic residues.

It localises to the golgi apparatus. This is an uncharacterized protein from Encephalitozoon cuniculi (strain GB-M1) (Microsporidian parasite).